We begin with the raw amino-acid sequence, 213 residues long: Homeobox protein koza (213 aa).

Positions 24–72 are disordered; sequence ILSHMGPGSKEKSLGFPKTDQDQDSSLRDTEEKYASEKLQSSSQPAEIH. Over residues 32–59 the composition is skewed to basic and acidic residues; sequence SKEKSLGFPKTDQDQDSSLRDTEEKYAS. The segment at residues 102 to 161 is a DNA-binding region (homeobox); sequence QKRSRAAFSHSQVIELERKFSSQKYLSAPERAQLAKSLKLTETQVKIWFQNRRYKTKRKQ.

This sequence belongs to the NK-3 homeobox family. In terms of tissue distribution, expressed in the muscle layer of embryonic somites. In tailbud embryos, expressed throughout the entire myotome but at the mid-tailbud stage (stage 32), expression becomes restricted to the outer periphery of the somite so that by the tadpole stage only the outer, type I cells show expression. Also expressed in the dorsal cement gland and in the myocardial layer of the developing heart. In all tissues, expression begins after terminal differentiation.

The protein resides in the nucleus. In terms of biological role, may regulate cell proliferation in a tissue-specific manner. The protein is Homeobox protein koza of Xenopus laevis (African clawed frog).